The sequence spans 301 residues: Sulfate adenylyltransferase subunit 2 2 (301 aa).

It belongs to the PAPS reductase family. CysD subfamily. Heterodimer composed of CysD, the smaller subunit, and CysN.

The catalysed reaction is sulfate + ATP + H(+) = adenosine 5'-phosphosulfate + diphosphate. The protein operates within sulfur metabolism; hydrogen sulfide biosynthesis; sulfite from sulfate: step 1/3. Functionally, with CysN forms the ATP sulfurylase (ATPS) that catalyzes the adenylation of sulfate producing adenosine 5'-phosphosulfate (APS) and diphosphate, the first enzymatic step in sulfur assimilation pathway. APS synthesis involves the formation of a high-energy phosphoric-sulfuric acid anhydride bond driven by GTP hydrolysis by CysN coupled to ATP hydrolysis by CysD. This Shewanella sediminis (strain HAW-EB3) protein is Sulfate adenylyltransferase subunit 2 2.